Reading from the N-terminus, the 508-residue chain is Probable cytosol aminopeptidase (508 aa).

The Mn(2+) site is built by lysine 274 and aspartate 279. Lysine 286 is an active-site residue. Mn(2+)-binding residues include aspartate 297, aspartate 356, and glutamate 358. The active site involves arginine 360.

The protein belongs to the peptidase M17 family. Requires Mn(2+) as cofactor.

The protein resides in the cytoplasm. It catalyses the reaction Release of an N-terminal amino acid, Xaa-|-Yaa-, in which Xaa is preferably Leu, but may be other amino acids including Pro although not Arg or Lys, and Yaa may be Pro. Amino acid amides and methyl esters are also readily hydrolyzed, but rates on arylamides are exceedingly low.. The catalysed reaction is Release of an N-terminal amino acid, preferentially leucine, but not glutamic or aspartic acids.. In terms of biological role, presumably involved in the processing and regular turnover of intracellular proteins. Catalyzes the removal of unsubstituted N-terminal amino acids from various peptides. The polypeptide is Probable cytosol aminopeptidase (Paraburkholderia xenovorans (strain LB400)).